The chain runs to 284 residues: Tryptophan 2,3-dioxygenase (284 aa).

Substrate contacts are provided by residues 53–57 (FIVQH), tyrosine 115, and arginine 119. Histidine 242 serves as a coordination point for heme. Threonine 256 provides a ligand contact to substrate.

Belongs to the tryptophan 2,3-dioxygenase family. As to quaternary structure, homotetramer. Heme serves as cofactor.

The enzyme catalyses L-tryptophan + O2 = N-formyl-L-kynurenine. It participates in amino-acid degradation; L-tryptophan degradation via kynurenine pathway; L-kynurenine from L-tryptophan: step 1/2. In terms of biological role, heme-dependent dioxygenase that catalyzes the oxidative cleavage of the L-tryptophan (L-Trp) pyrrole ring and converts L-tryptophan to N-formyl-L-kynurenine. Catalyzes the oxidative cleavage of the indole moiety. In Bordetella pertussis (strain Tohama I / ATCC BAA-589 / NCTC 13251), this protein is Tryptophan 2,3-dioxygenase.